We begin with the raw amino-acid sequence, 505 residues long: Metal transporter Nramp3.2 (505 aa).

The next 12 helical transmembrane spans lie at 50–70, 78–98, 127–147, 159–179, 187–207, 233–253, 280–300, 321–341, 369–389, 400–420, 439–459, and 466–486; these read LWLF…PGNL, AIAG…GLLV, MVLW…EVIG, FVPL…FLFL, LEAV…WMFA, AVGV…SALV, ALVI…KGFY, YGGG…AAGQ, ALIT…VFDT, WLNV…LCLV, AWLV…DFFF, and AFTT…IYLI.

This sequence belongs to the NRAMP (TC 2.A.55) family. In terms of tissue distribution, expressed in roots, stems, buds and leaves.

The protein localises to the vacuole membrane. The enzyme catalyses Mn(2+)(in) = Mn(2+)(out). The catalysed reaction is Fe(2+)(in) = Fe(2+)(out). In terms of biological role, divalent metal transporter. Can transport manganese (Mn) and iron (Fe). Involved in the release of metals stored in the vacuole. In Populus trichocarpa (Western balsam poplar), this protein is Metal transporter Nramp3.2.